The chain runs to 523 residues: Signal peptide peptidase-like 2A (523 aa).

The first 25 residues, 1 to 25 (MGLLHSLHAPAAALLWSCLLGLAAA), serve as a signal peptide directing secretion. Over 26–175 (QEAILHASTN…PSWPNFDYTL (150 aa)) the chain is Lumenal. N-linked (GlcNAc...) asparagine glycans are attached at residues asparagine 51, asparagine 61, asparagine 69, asparagine 119, asparagine 129, and asparagine 135. One can recognise a PA domain in the interval 70 to 155 (LTGTALCHLS…KDFKDMKETL (86 aa)). Residues 176–196 (VVIFVIAVFTVALGGYWSGLI) form a helical membrane-spanning segment. Residues 197–224 (ELENMKSVEDAEDRETRKKKDDYLTFSP) lie on the Cytoplasmic side of the membrane. A helical membrane pass occupies residues 225–245 (LTVVVFVVICCIMIVLLYFFY). The Lumenal segment spans residues 246–247 (RW). Residues 248–268 (LVYVMIAIFCIASSMSLYNCL) traverse the membrane as a helical segment. At 269 to 288 (SALIHRMPCGQCTILCCGKN) the chain is on the cytoplasmic side. Residues 289-309 (IKVSLIFLSGLCISVAVVWAV) form a helical membrane-spanning segment. Topologically, residues 310-315 (FRNEDR) are lumenal. The chain crosses the membrane as a helical span at residues 316-336 (WAWILQDILGIAFCLNLIKTM). Topologically, residues 337–344 (KLPNFMSC) are cytoplasmic. A helical transmembrane segment spans residues 345–365 (VILLGLLLIYDVFFVFITPFI). Aspartate 355 is a catalytic residue. Over 366–403 (TKNGESIMVELAAGPFENAEKLPVVIRVPKLMGYSVMS) the chain is Lumenal. Residues 404-424 (VCSVPVSVLGFGDIIVPGLLI) form a helical membrane-spanning segment. Aspartate 416 is a catalytic residue. At 425–440 (AYCRRFDVQTGSSIYY) the chain is on the cytoplasmic side. The helical transmembrane segment at 441–461 (ISSTIAYAVGMIITFVVLMVM) threads the bilayer. The Lumenal portion of the chain corresponds to 462 to 463 (KT). Residues 464–484 (GQPALLYLVPCTLITVSVVAW) form a helical membrane-spanning segment. A PAL motif is present at residues 466-468 (PAL). The Cytoplasmic segment spans residues 485-523 (SRKEMKKFWKGSSYQVMDHLDYSTNEENPVTTDEQIVQQ). A YXXo lysosomal targeting motif motif is present at residues 498–501 (YQVM).

This sequence belongs to the peptidase A22B family. Interacts with ITM2B. Post-translationally, glycosylated.

It localises to the late endosome membrane. Its subcellular location is the lysosome membrane. It is found in the membrane. Its function is as follows. Intramembrane-cleaving aspartic protease (I-CLiP) that cleaves type II membrane signal peptides in the hydrophobic plane of the membrane. Functions in FASLG, ITM2B and TNF processing. Catalyzes the intramembrane cleavage of the anchored fragment of shed TNF-alpha (TNF), which promotes the release of the intracellular domain (ICD) for signaling to the nucleus. Also responsible for the intramembrane cleavage of Fas antigen ligand FASLG, which promotes the release of the intracellular FasL domain (FasL ICD). Essential for degradation of the invariant chain CD74 that plays a central role in the function of antigen-presenting cells in the immune system. Plays a role in the regulation of innate and adaptive immunity. The protein is Signal peptide peptidase-like 2A of Mus musculus (Mouse).